The chain runs to 288 residues: ATP synthase gamma chain (288 aa).

The protein belongs to the ATPase gamma chain family. In terms of assembly, F-type ATPases have 2 components, CF(1) - the catalytic core - and CF(0) - the membrane proton channel. CF(1) has five subunits: alpha(3), beta(3), gamma(1), delta(1), epsilon(1). CF(0) has three main subunits: a, b and c.

It localises to the cell membrane. In terms of biological role, produces ATP from ADP in the presence of a proton gradient across the membrane. The gamma chain is believed to be important in regulating ATPase activity and the flow of protons through the CF(0) complex. The sequence is that of ATP synthase gamma chain from Macrococcus caseolyticus (strain JCSC5402) (Macrococcoides caseolyticum).